Here is a 90-residue protein sequence, read N- to C-terminus: Probable Fe(2+)-trafficking protein (90 aa).

This sequence belongs to the Fe(2+)-trafficking protein family.

Its function is as follows. Could be a mediator in iron transactions between iron acquisition and iron-requiring processes, such as synthesis and/or repair of Fe-S clusters in biosynthetic enzymes. The polypeptide is Probable Fe(2+)-trafficking protein (Xylella fastidiosa (strain 9a5c)).